A 365-amino-acid chain; its full sequence is 3-dehydroquinate synthase (365 aa).

Residues 106–110, 130–131, lysine 142, lysine 151, and 169–172 contribute to the NAD(+) site; these read GVIGD, TT, and FFAT. Zn(2+) is bound by residues glutamate 184, histidine 247, and histidine 264.

It belongs to the sugar phosphate cyclases superfamily. Dehydroquinate synthase family. Co(2+) serves as cofactor. The cofactor is Zn(2+). It depends on NAD(+) as a cofactor.

It is found in the cytoplasm. It carries out the reaction 7-phospho-2-dehydro-3-deoxy-D-arabino-heptonate = 3-dehydroquinate + phosphate. Its pathway is metabolic intermediate biosynthesis; chorismate biosynthesis; chorismate from D-erythrose 4-phosphate and phosphoenolpyruvate: step 2/7. Functionally, catalyzes the conversion of 3-deoxy-D-arabino-heptulosonate 7-phosphate (DAHP) to dehydroquinate (DHQ). In Listeria welshimeri serovar 6b (strain ATCC 35897 / DSM 20650 / CCUG 15529 / CIP 8149 / NCTC 11857 / SLCC 5334 / V8), this protein is 3-dehydroquinate synthase.